A 593-amino-acid polypeptide reads, in one-letter code: Efflux pump FUB11 (593 aa).

A disordered region spans residues 1-45 (MAIDPQPSSPSLSSETIANDTIGNDNNVNEPSVEPKTQEHQHTVP). A compositionally biased stretch (polar residues) spans 9–30 (SPSLSSETIANDTIGNDNNVNE). N-linked (GlcNAc...) asparagine glycosylation occurs at Asn-19. 12 helical membrane-spanning segments follow: residues 98–118 (WAFVLLQSLACLATTFASSAY), 135–155 (VATLGISLYVLGFTFGPLVWA), 167–187 (FFFTFMVATAFSAGAAGAGSI), 195–215 (FLTGSIGSAPLSNAPALIADM), 227–247 (MFSGAPFLGPAIGPIAGGFLG), 254–274 (WLHGLMAAFTGVTWIACTVFI), 337–357 (IYISIIYGTMYMCFAAFPIVF), 367–387 (IGGLAFTGIVIGVILSIISFA), 410–430 (LPPAIMGSLLIPIGLFWFAWT), 438–458 (IVPIIGTVFFAWGLVLVFMAL), 468–488 (IFAASIMAANSALRSLFGAAF), and 503–523 (WASSIPAFLALACVPFPFLFY). A disordered region spans residues 570 to 593 (THNSHASAAHSHGHRRSLSYTRSA).

This sequence belongs to the major facilitator superfamily. DHA1 family. Polyamines/proton antiporter (TC 2.A.1.2.16) subfamily.

The protein localises to the cell membrane. Its function is as follows. Efflux pump involved in export of fusaric acid, a mycotoxin with low to moderate toxicity to animals and humans, but with high phytotoxic properties. Constitutes a self-protecting mechanism of the fungus against critical levels of FSA within the cell. In Gibberella moniliformis (strain M3125 / FGSC 7600) (Maize ear and stalk rot fungus), this protein is Efflux pump FUB11.